A 338-amino-acid polypeptide reads, in one-letter code: 5-dehydro-2-deoxygluconokinase (338 aa).

This sequence belongs to the carbohydrate kinase PfkB family.

The enzyme catalyses 5-dehydro-2-deoxy-D-gluconate + ATP = 6-phospho-5-dehydro-2-deoxy-D-gluconate + ADP + H(+). It functions in the pathway polyol metabolism; myo-inositol degradation into acetyl-CoA; acetyl-CoA from myo-inositol: step 5/7. Its function is as follows. Catalyzes the phosphorylation of 5-dehydro-2-deoxy-D-gluconate (2-deoxy-5-keto-D-gluconate or DKG) to 6-phospho-5-dehydro-2-deoxy-D-gluconate (DKGP). This chain is 5-dehydro-2-deoxygluconokinase, found in Mesomycoplasma hyopneumoniae (strain 7448) (Mycoplasma hyopneumoniae).